The primary structure comprises 238 residues: UPF0328 protein ECU07_0010 (238 aa).

Disordered stretches follow at residues 1 to 154 (MAAP…NTQR) and 211 to 238 (GRLH…LATL). Over residues 106–128 (HTEGCHTHEANPEPNTKHTETES) the composition is skewed to basic and acidic residues. Polar residues predominate over residues 129 to 152 (PKPQTSTQHHTPITIPSSLLSQNT).

This sequence belongs to the UPF0328 family.

The chain is UPF0328 protein ECU07_0010 from Encephalitozoon cuniculi (strain GB-M1) (Microsporidian parasite).